A 330-amino-acid chain; its full sequence is Diacylglycerol kinase (330 aa).

Residues 1 to 132 (MRKCARIIYN…VDIGKMNNRY (132 aa)) enclose the DAGKc domain. Residues 10–14 (NPTSG), T41, 67–73 (GDGTLNE), and T94 contribute to the ATP site. Positions 213, 216, and 218 each coordinate Mg(2+). Catalysis depends on E273, which acts as the Proton acceptor.

The protein belongs to the diacylglycerol/lipid kinase family. Homodimer. Mg(2+) serves as cofactor.

It catalyses the reaction a 1,2-diacyl-sn-glycerol + ATP = a 1,2-diacyl-sn-glycero-3-phosphate + ADP + H(+). Its function is as follows. Catalyzes the phosphorylation of diacylglycerol (DAG) into phosphatidic acid. Is a key enzyme involved in the production of lipoteichoic acid by reintroducing DAG formed from the breakdown of membrane phospholipids into the phosphatidylglycerol biosynthetic pathway. The chain is Diacylglycerol kinase (dagK) from Staphylococcus haemolyticus (strain JCSC1435).